Reading from the N-terminus, the 504-residue chain is Aspartyl/glutamyl-tRNA(Asn/Gln) amidotransferase subunit B (504 aa).

This sequence belongs to the GatB/GatE family. GatB subfamily. Heterotrimer of A, B and C subunits.

It catalyses the reaction L-glutamyl-tRNA(Gln) + L-glutamine + ATP + H2O = L-glutaminyl-tRNA(Gln) + L-glutamate + ADP + phosphate + H(+). It carries out the reaction L-aspartyl-tRNA(Asn) + L-glutamine + ATP + H2O = L-asparaginyl-tRNA(Asn) + L-glutamate + ADP + phosphate + 2 H(+). Functionally, allows the formation of correctly charged Asn-tRNA(Asn) or Gln-tRNA(Gln) through the transamidation of misacylated Asp-tRNA(Asn) or Glu-tRNA(Gln) in organisms which lack either or both of asparaginyl-tRNA or glutaminyl-tRNA synthetases. The reaction takes place in the presence of glutamine and ATP through an activated phospho-Asp-tRNA(Asn) or phospho-Glu-tRNA(Gln). This Tropheryma whipplei (strain TW08/27) (Whipple's bacillus) protein is Aspartyl/glutamyl-tRNA(Asn/Gln) amidotransferase subunit B.